The following is a 284-amino-acid chain: 2-dehydro-3-deoxyphosphooctonate aldolase (284 aa).

The protein belongs to the KdsA family.

Its subcellular location is the cytoplasm. It carries out the reaction D-arabinose 5-phosphate + phosphoenolpyruvate + H2O = 3-deoxy-alpha-D-manno-2-octulosonate-8-phosphate + phosphate. It participates in carbohydrate biosynthesis; 3-deoxy-D-manno-octulosonate biosynthesis; 3-deoxy-D-manno-octulosonate from D-ribulose 5-phosphate: step 2/3. The protein operates within bacterial outer membrane biogenesis; lipopolysaccharide biosynthesis. This is 2-dehydro-3-deoxyphosphooctonate aldolase from Escherichia fergusonii (strain ATCC 35469 / DSM 13698 / CCUG 18766 / IAM 14443 / JCM 21226 / LMG 7866 / NBRC 102419 / NCTC 12128 / CDC 0568-73).